Consider the following 239-residue polypeptide: Serine protease SplF (239 aa).

A signal peptide spans 1–36 (MNKNIIIKSIAALTILTSVTGVGTTMVEGIQQTAKA). Catalysis depends on charge relay system residues His75, Asp114, and Ser192.

Belongs to the peptidase S1B family.

Its subcellular location is the secreted. The sequence is that of Serine protease SplF (splF) from Staphylococcus aureus (strain Mu50 / ATCC 700699).